The sequence spans 305 residues: Insulin-like peptide (305 aa).

The first 22 residues, 1–22, serve as a signal peptide directing secretion; the sequence is MNLSSVYVLASLAVVCLLVKET. 3 disulfides stabilise this stretch: Cys-28/Cys-87, Cys-40/Cys-100, and Cys-86/Cys-91. The propeptide at 52-76 is connecting peptide; it reads SVSKRAIDFISEQQAKDYMGAMPHI. Positions 102 to 114 are d; that stretch reads PYSTAPATATPVR. A propeptide spans 102–305 (d/E peptide); it reads PYSTAPATAT…RDSYHLTELR (204 aa). Low complexity predominate over residues 107 to 118; it reads PATATPVRTTEP. Disordered regions lie at residues 107-130 and 236-305; these read PATA…PLDG and HNQT…TELR. The segment at 115–305 is e; sequence TTEPQPEEAE…RDSYHLTELR (191 aa). Over residues 119-128 the composition is skewed to acidic residues; the sequence is QPEEAEDDPL. Composition is skewed to basic and acidic residues over residues 236–245 and 291–305; these read HNQTDKKEPT and RRIE…TELR.

Belongs to the insulin family.

The protein resides in the secreted. In Branchiostoma californiense (California lancelet), this protein is Insulin-like peptide (ILP).